We begin with the raw amino-acid sequence, 492 residues long: Probable cytochrome P450 516B1 (492 aa).

Residues 1-17 (MYLILSLIIFLAYVAFH) form a helical membrane-spanning segment. Cys438 is a heme binding site.

The protein belongs to the cytochrome P450 family. The cofactor is heme.

The protein resides in the membrane. This Dictyostelium discoideum (Social amoeba) protein is Probable cytochrome P450 516B1 (cyp516B1).